We begin with the raw amino-acid sequence, 387 residues long: Protein mab-21-like 3 (387 aa).

The protein belongs to the mab-21 family.

This is Protein mab-21-like 3 (mab21L3) from Danio rerio (Zebrafish).